The sequence spans 248 residues: Probable transcriptional regulatory protein Smed_2641 (248 aa).

Belongs to the TACO1 family.

It localises to the cytoplasm. In Sinorhizobium medicae (strain WSM419) (Ensifer medicae), this protein is Probable transcriptional regulatory protein Smed_2641.